The chain runs to 156 residues: ATP synthase subunit b (156 aa).

Residues 3–23 (INFTLLAQALAFAGLIWIIAT) form a helical membrane-spanning segment.

It belongs to the ATPase B chain family. F-type ATPases have 2 components, F(1) - the catalytic core - and F(0) - the membrane proton channel. F(1) has five subunits: alpha(3), beta(3), gamma(1), delta(1), epsilon(1). F(0) has three main subunits: a(1), b(2) and c(10-14). The alpha and beta chains form an alternating ring which encloses part of the gamma chain. F(1) is attached to F(0) by a central stalk formed by the gamma and epsilon chains, while a peripheral stalk is formed by the delta and b chains.

It localises to the cell membrane. Functionally, f(1)F(0) ATP synthase produces ATP from ADP in the presence of a proton or sodium gradient. F-type ATPases consist of two structural domains, F(1) containing the extramembraneous catalytic core and F(0) containing the membrane proton channel, linked together by a central stalk and a peripheral stalk. During catalysis, ATP synthesis in the catalytic domain of F(1) is coupled via a rotary mechanism of the central stalk subunits to proton translocation. In terms of biological role, component of the F(0) channel, it forms part of the peripheral stalk, linking F(1) to F(0). The sequence is that of ATP synthase subunit b from Stenotrophomonas maltophilia (strain K279a).